The following is a 1581-amino-acid chain: MPEPTKISILGKESIVADFGLWRNYVAKDLISGCPSTTYVLITDTNIGSIYTPSFQKTFEEAAAAISPSPRLLVYHAPPGEVSKSRQTKADIEDWMLSQSPPCGRDTVVIALGGGVIGDLTGFIAATYMRGVRYVQVPTTLLAMVDSSIGGKTAIDTPLGKNLIGAIWQPTRIYIDLEFLETLPVREFINGMAEVIKTAAISSEEEFTALEENAETILSAVRREVKPGQHRFAGLEDILKARILASARHKAYVVSEDEREGGLRNLLNWGHSIGHAIEAILTPQILHGECVAIGMVKEAELARHLGILKNVAVARIVKCIAAYGLPTSLKDSRIRKLTAGKHCSVDQLLFNMALDKKNDGPKKKIVLLSAIGQPYEPKASVVPNEDISVVLAPSVEVHPGVPKESNVVCAPPGSKSISNRALVLAALGSGTCRIKNLLYSDDTEVMMNALERIGAATFSWEEEGEVLVVNGKGGDIKASPTPLYLGNAGTASRFLTTVVTLATASTVDHSVLTGNNRMKQRPIGDLVDALTANGASVEYLEKKGSLPLKIGAGGGFAGGRINLAAKVSSQFVSSLLMCAPYAKEPVTLKLVGGKPISEPYIEMTTAMMRSFGIEVQKSTTEEFTYHIPQGRYVNPAEYVVESDASSATYPLAIAAVSGTTCTIPNIGSKSLQGDARFAVDVLRPMGCTVTQTETSTTVTGPADGILRPLPNVDMEPMTDAFLGASVLAAIARGEGSNHTTRIYGIANQRVKECNRIKAMKDELAKFGVVCREHDDGLEIDGIDRSTLRQPAGGVFCYDDHRVAFSFSVLSLVTPQPTLILEKECVGKTWPGWWDTLRQLFSVKLEGRELKEEETPVLTGAEKASASVFIIGMRGAGKTTSGKWVAKALNRPFVDLDTELETNEGMAIPEIIKQRGWQGFRDAELSLLQRTLKERATGYVFACGGGIVEIPEARKLLIDYHKNKGNVLLIMRDIKQVMDFLSIDQTRPAYVEDMMGVWLRRKPWFNECSNIQYYSQHASSSGLTRASEDFERFLKVVTGQVDNLSLIKQKKHSFFVSLTLPDLRSASDILDEVCVGSDAVELRVDLLKDPASDSDIPSVDYVAEQMSFLRSRTALPLIFTIRTKSQGGRFPDDAHDAAMDLYRLAMRSGSEFVDLEIAFPDEMLRAVTEMKGYSKIIASHHDPKGELSWSNMSWIKYYNRALEYGDVIKLVGVAKNLDDNTALRKFKTWAEEAHDVPMIAINMGDNGQLSRILNGFMTPVSHPSLPFKAAPGQLSATEIRRGLSLMGEIKKKRFAIFGNPVSVSRSPALHNTLFQQSGLPHEYTRLETSNAEDVKDFIRSPDFGGASVTIPLKLDIMPLLDEIAREAEIIGAVNTIVPVNNGSDKTRLVGYNTDWQGMILSLRNAGVYGANKDASAVVVGGGGTARAAIFALHNMGYSPIYVIGRSASKLQSMVETFPTGYNIRVVDSSEQIDTVPQVAIGTIPADRPIDPGMRETLCHMFERAQELDADIVKTGEKAPRVLLEMAYKPAVTALMQLASDAGWLTIPGLEVLVGQGWYQFKHWTGISPLYKDARTAVLGDSA.

Positions 1 to 384 are 3-dehydroquinate synthase; that stretch reads MPEPTKISIL…YEPKASVVPN (384 aa). Residues 44 to 46, 81 to 84, 114 to 116, and Asp-119 each bind NAD(+); these read DTN, EVSK, and GGV. Residue Arg-130 coordinates 7-phospho-2-dehydro-3-deoxy-D-arabino-heptonate. Position 139–140 (139–140) interacts with NAD(+); that stretch reads TT. Residues Asp-146 and Lys-152 each coordinate 7-phospho-2-dehydro-3-deoxy-D-arabino-heptonate. An NAD(+)-binding site is contributed by Lys-161. Residue Asn-162 participates in 7-phospho-2-dehydro-3-deoxy-D-arabino-heptonate binding. NAD(+) is bound by residues 179–182 and Asn-190; that span reads FLET. Glu-194 lines the Zn(2+) pocket. 7-phospho-2-dehydro-3-deoxy-D-arabino-heptonate contacts are provided by residues 194 to 197 and Lys-250; that span reads EVIK. Glu-260 acts as the Proton acceptor; for 3-dehydroquinate synthase activity in catalysis. 7-phospho-2-dehydro-3-deoxy-D-arabino-heptonate contacts are provided by residues 264-268 and His-271; that span reads RNLLN. Zn(2+) is bound at residue His-271. The active-site Proton acceptor; for 3-dehydroquinate synthase activity is the His-275. 2 residues coordinate 7-phospho-2-dehydro-3-deoxy-D-arabino-heptonate: His-287 and Lys-356. Residue His-287 participates in Zn(2+) binding. An EPSP synthase region spans residues 397–842; the sequence is VHPGVPKESN…WDTLRQLFSV (446 aa). Cys-824 (for EPSP synthase activity) is an active-site residue. The tract at residues 864–1056 is shikimate kinase; sequence SASVFIIGMR…KQKKHSFFVS (193 aa). An ATP-binding site is contributed by 871–878; it reads GMRGAGKT. Positions 1057–1277 are 3-dehydroquinase; that stretch reads LTLPDLRSAS…AAPGQLSATE (221 aa). His-1180 acts as the Proton acceptor; for 3-dehydroquinate dehydratase activity in catalysis. Lys-1208 functions as the Schiff-base intermediate with substrate; for 3-dehydroquinate dehydratase activity in the catalytic mechanism. The interval 1290 to 1581 is shikimate dehydrogenase; the sequence is KKRFAIFGNP…ARTAVLGDSA (292 aa).

In the N-terminal section; belongs to the sugar phosphate cyclases superfamily. Dehydroquinate synthase family. This sequence in the 2nd section; belongs to the EPSP synthase family. It in the 3rd section; belongs to the shikimate kinase family. The protein in the 4th section; belongs to the type-I 3-dehydroquinase family. In the C-terminal section; belongs to the shikimate dehydrogenase family. Homodimer. It depends on Zn(2+) as a cofactor.

It is found in the cytoplasm. It carries out the reaction 7-phospho-2-dehydro-3-deoxy-D-arabino-heptonate = 3-dehydroquinate + phosphate. It catalyses the reaction 3-dehydroquinate = 3-dehydroshikimate + H2O. The catalysed reaction is shikimate + NADP(+) = 3-dehydroshikimate + NADPH + H(+). The enzyme catalyses shikimate + ATP = 3-phosphoshikimate + ADP + H(+). It carries out the reaction 3-phosphoshikimate + phosphoenolpyruvate = 5-O-(1-carboxyvinyl)-3-phosphoshikimate + phosphate. It participates in metabolic intermediate biosynthesis; chorismate biosynthesis; chorismate from D-erythrose 4-phosphate and phosphoenolpyruvate: step 2/7. The protein operates within metabolic intermediate biosynthesis; chorismate biosynthesis; chorismate from D-erythrose 4-phosphate and phosphoenolpyruvate: step 3/7. It functions in the pathway metabolic intermediate biosynthesis; chorismate biosynthesis; chorismate from D-erythrose 4-phosphate and phosphoenolpyruvate: step 4/7. Its pathway is metabolic intermediate biosynthesis; chorismate biosynthesis; chorismate from D-erythrose 4-phosphate and phosphoenolpyruvate: step 5/7. It participates in metabolic intermediate biosynthesis; chorismate biosynthesis; chorismate from D-erythrose 4-phosphate and phosphoenolpyruvate: step 6/7. Its function is as follows. The AROM polypeptide catalyzes 5 consecutive enzymatic reactions in prechorismate polyaromatic amino acid biosynthesis. This Aspergillus terreus (strain NIH 2624 / FGSC A1156) protein is Pentafunctional AROM polypeptide.